A 147-amino-acid polypeptide reads, in one-letter code: Male-specific protein scotti (147 aa).

The interval 57–76 (EPPLGVFPAQGGPNGPPRLR) is disordered. An N-linked (GlcNAc...) asparagine glycan is attached at Asn-128.

It belongs to the male-specific scotti family.

Post-meiotically transcribed gene that has a role in late spermiogenesis; required for actin cone progression during spermatid individualization. This Drosophila simulans (Fruit fly) protein is Male-specific protein scotti.